Consider the following 387-residue polypeptide: Succinate--CoA ligase [ADP-forming] subunit beta (387 aa).

Residues 9–236 (KGLFAKHNVP…RAATDPLELK (228 aa)) enclose the ATP-grasp domain. ATP contacts are provided by residues Lys-45, 52-54 (GRG), Ser-94, and Glu-99. Mg(2+) is bound by residues Asn-191 and Asp-205. Substrate is bound by residues Asn-256 and 318–320 (GIT).

It belongs to the succinate/malate CoA ligase beta subunit family. As to quaternary structure, heterotetramer of two alpha and two beta subunits. It depends on Mg(2+) as a cofactor.

It catalyses the reaction succinate + ATP + CoA = succinyl-CoA + ADP + phosphate. The enzyme catalyses GTP + succinate + CoA = succinyl-CoA + GDP + phosphate. Its pathway is carbohydrate metabolism; tricarboxylic acid cycle; succinate from succinyl-CoA (ligase route): step 1/1. Functionally, succinyl-CoA synthetase functions in the citric acid cycle (TCA), coupling the hydrolysis of succinyl-CoA to the synthesis of either ATP or GTP and thus represents the only step of substrate-level phosphorylation in the TCA. The beta subunit provides nucleotide specificity of the enzyme and binds the substrate succinate, while the binding sites for coenzyme A and phosphate are found in the alpha subunit. The protein is Succinate--CoA ligase [ADP-forming] subunit beta of Mycobacterium ulcerans (strain Agy99).